The primary structure comprises 1131 residues: Probable pre-mRNA-splicing factor ATP-dependent RNA helicase mog-1 (1131 aa).

Composition is skewed to basic and acidic residues over residues 1 to 12 (MSDKRADGRLEG), 65 to 122 (RGVT…DRSG), 139 to 148 (WDQDDREGSS), 160 to 173 (RGER…DSER), 180 to 225 (RSER…WEEE), and 407 to 416 (GNYKESHQFA). Disordered regions lie at residues 1-225 (MSDK…WEEE) and 389-416 (MGVK…HQFA). In terms of domain architecture, Helicase ATP-binding spans 451–614 (MNVIRENNVV…FGGNCPTFTI (164 aa)). Residue 464–471 (GETGSGKT) coordinates ATP. A DEAH box motif is present at residues 561–564 (DEAH). The Helicase C-terminal domain occupies 629–812 (PVEDYVDAAV…NVVLLLKSLG (184 aa)). 2 stretches are compositionally biased toward basic and acidic residues: residues 1085 to 1114 (EMRE…RRVV) and 1121 to 1131 (ARSERRKLWGL). Residues 1085-1131 (EMREAQKEMERRKEESDKAFKRPESSRRVVEVGSKSARSERRKLWGL) are disordered.

Belongs to the DEAD box helicase family. DEAH subfamily. PRP16 sub-subfamily.

It localises to the nucleus. It catalyses the reaction ATP + H2O = ADP + phosphate + H(+). In terms of biological role, probable ATP-binding RNA helicase involved in pre-mRNA splicing. This Caenorhabditis elegans protein is Probable pre-mRNA-splicing factor ATP-dependent RNA helicase mog-1 (mog-1).